We begin with the raw amino-acid sequence, 51 residues long: FVNQHLCGSHLVEALYLVCGERGFFYTPKTGIVEQCCTGVCSLYQLENYCN.

3 disulfides stabilise this stretch: C7-C37, C19-C50, and C36-C41.

Belongs to the insulin family. As to quaternary structure, heterodimer of a B chain and an A chain linked by two disulfide bonds.

The protein resides in the secreted. Functionally, insulin decreases blood glucose concentration. It increases cell permeability to monosaccharides, amino acids and fatty acids. It accelerates glycolysis, the pentose phosphate cycle, and glycogen synthesis in liver. This Elephas maximus (Indian elephant) protein is Insulin (INS).